The sequence spans 221 residues: Phosphoribosylformylglycinamidine synthase subunit PurQ (221 aa).

A Glutamine amidotransferase type-1 domain is found at 3–221 (AAVLVFPGSN…MFASLMQVMA (219 aa)). Catalysis depends on cysteine 87, which acts as the Nucleophile. Active-site residues include histidine 195 and glutamate 197.

In terms of assembly, part of the FGAM synthase complex composed of 1 PurL, 1 PurQ and 2 PurS subunits.

The protein localises to the cytoplasm. It catalyses the reaction N(2)-formyl-N(1)-(5-phospho-beta-D-ribosyl)glycinamide + L-glutamine + ATP + H2O = 2-formamido-N(1)-(5-O-phospho-beta-D-ribosyl)acetamidine + L-glutamate + ADP + phosphate + H(+). It carries out the reaction L-glutamine + H2O = L-glutamate + NH4(+). It functions in the pathway purine metabolism; IMP biosynthesis via de novo pathway; 5-amino-1-(5-phospho-D-ribosyl)imidazole from N(2)-formyl-N(1)-(5-phospho-D-ribosyl)glycinamide: step 1/2. Part of the phosphoribosylformylglycinamidine synthase complex involved in the purines biosynthetic pathway. Catalyzes the ATP-dependent conversion of formylglycinamide ribonucleotide (FGAR) and glutamine to yield formylglycinamidine ribonucleotide (FGAM) and glutamate. The FGAM synthase complex is composed of three subunits. PurQ produces an ammonia molecule by converting glutamine to glutamate. PurL transfers the ammonia molecule to FGAR to form FGAM in an ATP-dependent manner. PurS interacts with PurQ and PurL and is thought to assist in the transfer of the ammonia molecule from PurQ to PurL. The chain is Phosphoribosylformylglycinamidine synthase subunit PurQ from Zymomonas mobilis subsp. mobilis (strain ATCC 31821 / ZM4 / CP4).